A 620-amino-acid chain; its full sequence is MDKNQIIGISLISVLMLGYFGFMSTQTPETPVTTPPAITQPVQSDTVLLKSAATDTALKAQNQREYGDFAAAMVGEAKEYKLENKDVVVTLSTKGGTIKSVLLKNYFTWDKKQLFLFKQENNQLSLILNTNKKPVDLYSLYYAGVESKAGDKQVVTFKTDAGNGKTIEHTYTLGAAGFTVDYNLKAAGFGGELPNLPLTLDWREQVERIEYDSEQARVKSTVNYMAAEDGFDYLSEASKDRETETLSNVYWVSLKQKFFNSGFYIREGGTIPSATVTAYPMYSTLPNAPVNSEKFIKALEAQVQLPLEAVISGKAAYAFYFGPNDFKICKAVPAENYQKNVNLGWPLVSWINRFVVIPVFDGLKGVFSSFGLIIVILVLLIKLVLLPLSYKSFVSMAKMKALKPELDELKAKHGDDQQAIQMEQMQVYKQFGINPLSGCIPVLLQMPILLAMFNFFPNAIDLRGESLWWATDLSSYDEFAKLPFTIPFYGSHVSMFTLLMTISTLAYTWVNNQVSTVTGPMKYMSYAMPVVFLFVLNSFPAGLSFYYFVSNLVTIAQQLIIRRFVDEGQLRLQLEAKRDKNLSGDTTGGAPKKNRFMARMEEAMKQREQEQQFKKNIKKK.

The next 6 membrane-spanning stretches (helical) occupy residues 5–25, 343–363, 366–386, 436–456, 482–502, and 529–549; these read QIIGISLISVLMLGYFGFMST, LGWPLVSWINRFVVIPVFDGL, VFSSFGLIIVILVLLIKLVLL, LSGCIPVLLQMPILLAMFNFF, LPFTIPFYGSHVSMFTLLMTI, and PVVFLFVLNSFPAGLSFYYFV.

This sequence belongs to the OXA1/ALB3/YidC family. Type 1 subfamily. Interacts with the Sec translocase complex via SecD. Specifically interacts with transmembrane segments of nascent integral membrane proteins during membrane integration.

The protein localises to the cell inner membrane. Its function is as follows. Required for the insertion and/or proper folding and/or complex formation of integral membrane proteins into the membrane. Involved in integration of membrane proteins that insert both dependently and independently of the Sec translocase complex, as well as at least some lipoproteins. Aids folding of multispanning membrane proteins. The sequence is that of Membrane protein insertase YidC from Cytophaga hutchinsonii (strain ATCC 33406 / DSM 1761 / CIP 103989 / NBRC 15051 / NCIMB 9469 / D465).